A 158-amino-acid polypeptide reads, in one-letter code: Ribosome maturation factor RimP (158 aa).

Belongs to the RimP family.

The protein localises to the cytoplasm. Its function is as follows. Required for maturation of 30S ribosomal subunits. The chain is Ribosome maturation factor RimP from Pseudomonas fluorescens (strain ATCC BAA-477 / NRRL B-23932 / Pf-5).